Reading from the N-terminus, the 230-residue chain is Sugar fermentation stimulation protein homolog (230 aa).

The protein belongs to the SfsA family.

The protein is Sugar fermentation stimulation protein homolog of Caldivirga maquilingensis (strain ATCC 700844 / DSM 13496 / JCM 10307 / IC-167).